Here is a 407-residue protein sequence, read N- to C-terminus: UPF0761 membrane protein AZOSEA40600 (407 aa).

Transmembrane regions (helical) follow at residues serine 29–phenylalanine 49, glycine 92–isoleucine 112, leucine 132–alanine 152, phenylalanine 174–valine 194, glycine 207–valine 227, and phenylalanine 239–glycine 259.

The protein belongs to the UPF0761 family.

The protein localises to the cell inner membrane. This Aromatoleum aromaticum (strain DSM 19018 / LMG 30748 / EbN1) (Azoarcus sp. (strain EbN1)) protein is UPF0761 membrane protein AZOSEA40600.